Here is a 150-residue protein sequence, read N- to C-terminus: Large ribosomal subunit protein bL9 (150 aa).

It belongs to the bacterial ribosomal protein bL9 family.

Binds to the 23S rRNA. The protein is Large ribosomal subunit protein bL9 of Shewanella halifaxensis (strain HAW-EB4).